Reading from the N-terminus, the 219-residue chain is Lipid A acyltransferase PagP (219 aa).

The signal sequence occupies residues 1-28 (MRLILISHSRLFALSALFLIPTFDSLSA). Positions 39-63 (IDRTTQSDSTTQRDSKTRRDPAPSF) are disordered. Residues 49 to 59 (TQRDSKTRRDP) are compositionally biased toward basic and acidic residues. Active-site residues include His-91, Asp-134, and Ser-135.

It belongs to the lipid A palmitoyltransferase family. Homodimer.

The protein resides in the cell outer membrane. It catalyses the reaction a lipid A + a 1,2-diacyl-sn-glycero-3-phosphocholine = a hepta-acyl lipid A + a 2-acyl-sn-glycero-3-phosphocholine. The catalysed reaction is a lipid IVA + a 1,2-diacyl-sn-glycero-3-phosphocholine = a lipid IVB + a 2-acyl-sn-glycero-3-phosphocholine. It carries out the reaction a lipid IIA + a 1,2-diacyl-sn-glycero-3-phosphocholine = a lipid IIB + a 2-acyl-sn-glycero-3-phosphocholine. Functionally, transfers a fatty acid residue from the sn-1 position of a phospholipid to the N-linked hydroxyfatty acid chain on the proximal unit of lipid A or its precursors. In Dickeya zeae (strain Ech586) (Dickeya dadantii (strain Ech586)), this protein is Lipid A acyltransferase PagP.